A 429-amino-acid polypeptide reads, in one-letter code: Enolase (429 aa).

Glutamine 168 contacts (2R)-2-phosphoglycerate. Glutamate 210 acts as the Proton donor in catalysis. Residues aspartate 247, glutamate 288, and aspartate 315 each contribute to the Mg(2+) site. 4 residues coordinate (2R)-2-phosphoglycerate: lysine 340, arginine 369, serine 370, and lysine 391. Catalysis depends on lysine 340, which acts as the Proton acceptor.

The protein belongs to the enolase family. The cofactor is Mg(2+).

Its subcellular location is the cytoplasm. It localises to the secreted. The protein resides in the cell surface. The catalysed reaction is (2R)-2-phosphoglycerate = phosphoenolpyruvate + H2O. The protein operates within carbohydrate degradation; glycolysis; pyruvate from D-glyceraldehyde 3-phosphate: step 4/5. Catalyzes the reversible conversion of 2-phosphoglycerate (2-PG) into phosphoenolpyruvate (PEP). It is essential for the degradation of carbohydrates via glycolysis. This chain is Enolase, found in Nostoc sp. (strain PCC 7120 / SAG 25.82 / UTEX 2576).